The following is a 189-amino-acid chain: Calcyphosin (189 aa).

4 consecutive EF-hand domains span residues 21–56, 57–92, 93–128, and 136–172; these read LGIQ…LGLV, LDTA…PMSQ, AREA…RTHP, and TEEE…VSAS. Ca(2+)-binding residues include aspartate 34, aspartate 36, serine 38, serine 40, glutamate 45, aspartate 70, aspartate 72, serine 74, threonine 76, glutamate 81, aspartate 106, serine 108, aspartate 110, and aspartate 117. At serine 40 the chain carries Phosphoserine; by PKA.

Monomer. Does not form oligomers in the presence of calcium. Post-translationally, phosphorylated in response to thyrotropin and cAMP. As to expression, detected in thyroid, salivary gland, lung, brain and cerebellum (at protein level).

It is found in the cytoplasm. Calcium-binding protein. May play a role in cellular signaling events (Potential). This is Calcyphosin (CAPS) from Canis lupus familiaris (Dog).